The sequence spans 313 residues: MKVNLDRNSSGFCFGVQSTINVAEEKLRKEKGLYSLGDVVHNEVEVKRLEALGLITIDTPAFNELKNAPVLIRAHGEPPSTYETANRNNLTLTDTTCPVVAKLQRTASQLNELGYQIIIYGKHLHPEVIGINGHCQNRALIIKHADLSDPEETLPIDLSKKTALISQTTMDVSGFYELKKNLEKLFSKGGRETGPWAEVKSIGEAEPMPEFIFKDTICRQISNRNQKLQDFSRANERIIFVAGKKSSNGQVLYAICKEANPESHFIEDVEELQSEWFTTTQGKTVESIGVCGATSTPMWLLEKVANHIEAHYA.

Residue Cys13 coordinates [4Fe-4S] cluster. (2E)-4-hydroxy-3-methylbut-2-enyl diphosphate is bound by residues His41 and His75. Dimethylallyl diphosphate contacts are provided by His41 and His75. Residues His41 and His75 each coordinate isopentenyl diphosphate. Cys97 is a binding site for [4Fe-4S] cluster. Position 125 (His125) interacts with (2E)-4-hydroxy-3-methylbut-2-enyl diphosphate. His125 provides a ligand contact to dimethylallyl diphosphate. Residue His125 participates in isopentenyl diphosphate binding. The Proton donor role is filled by Glu127. Position 168 (Thr168) interacts with (2E)-4-hydroxy-3-methylbut-2-enyl diphosphate. Residue Cys218 coordinates [4Fe-4S] cluster. Residues Ser246, Ser247, Asn248, and Ser295 each coordinate (2E)-4-hydroxy-3-methylbut-2-enyl diphosphate. Dimethylallyl diphosphate is bound by residues Ser246, Ser247, Asn248, and Ser295. Ser246, Ser247, Asn248, and Ser295 together coordinate isopentenyl diphosphate.

This sequence belongs to the IspH family. The cofactor is [4Fe-4S] cluster.

It carries out the reaction isopentenyl diphosphate + 2 oxidized [2Fe-2S]-[ferredoxin] + H2O = (2E)-4-hydroxy-3-methylbut-2-enyl diphosphate + 2 reduced [2Fe-2S]-[ferredoxin] + 2 H(+). The catalysed reaction is dimethylallyl diphosphate + 2 oxidized [2Fe-2S]-[ferredoxin] + H2O = (2E)-4-hydroxy-3-methylbut-2-enyl diphosphate + 2 reduced [2Fe-2S]-[ferredoxin] + 2 H(+). It functions in the pathway isoprenoid biosynthesis; dimethylallyl diphosphate biosynthesis; dimethylallyl diphosphate from (2E)-4-hydroxy-3-methylbutenyl diphosphate: step 1/1. The protein operates within isoprenoid biosynthesis; isopentenyl diphosphate biosynthesis via DXP pathway; isopentenyl diphosphate from 1-deoxy-D-xylulose 5-phosphate: step 6/6. Its function is as follows. Catalyzes the conversion of 1-hydroxy-2-methyl-2-(E)-butenyl 4-diphosphate (HMBPP) into a mixture of isopentenyl diphosphate (IPP) and dimethylallyl diphosphate (DMAPP). Acts in the terminal step of the DOXP/MEP pathway for isoprenoid precursor biosynthesis. The protein is 4-hydroxy-3-methylbut-2-enyl diphosphate reductase of Chlorobium phaeovibrioides (strain DSM 265 / 1930) (Prosthecochloris vibrioformis (strain DSM 265)).